The chain runs to 349 residues: MEKPTRQTPFYTQHRAELLVLSSQIAAALLHALARVVEVGSGLKERVHPFTVLQIRLFITVLGCTAYLWRARIDFLGPTGLRPLLALRAAGGVFGACGFYLSISYLSLSEATVLNFIAPLGAIMLTTYWEGRTFAFLDLIACITALAGVVLVLQPIPIYKAVAQAEISSSISTDPYAHLKGVVSGITGVAGGIVAFSAMNRLGKNVQPAVTINYFGVSICIVTTAFSTIMPEVVWPTRIESWCLLAIIGILGLVMEYLLTAGLGSDDPRVTIMIYSQVLWALFLDWAIWRSHVNVLTVLGSMVVVASLAVPYLFRESSHPKEDMFSTRSGMDDIEEGQDEAHANYISLE.

One can recognise an EamA domain in the interval 25-153 (IAAALLHALA…TALAGVVLVL (129 aa)). 9 helical membrane passes run 49–69 (PFTV…AYLW), 89–109 (AAGG…LSLS), 111–131 (ATVL…YWEG), 133–153 (TFAF…VLVL), 179–199 (LKGV…FSAM), 215–235 (FGVS…EVVW), 244–264 (LLAI…AGLG), 269–289 (RVTI…WAIW), and 294–314 (NVLT…PYLF).

It belongs to the TPT transporter family. SLC35D subfamily.

It is found in the membrane. Probable transporter; part of the gene cluster that mediates the biosynthesis of the secondary metabolite victorin, the molecular basis for Victoria blight of oats. This chain is Probable transporter vicT, found in Bipolaris victoriae (strain FI3) (Victoria blight of oats agent).